We begin with the raw amino-acid sequence, 763 residues long: Amine oxidase [copper-containing] 3 (763 aa).

Topologically, residues 2–6 (TQKTT) are cytoplasmic. A helical; Signal-anchor for type II membrane protein membrane pass occupies residues 7–27 (LVLLALAVITIFALVCVLLAG). The Extracellular segment spans residues 28 to 763 (RSGDGGRLSQ…AFSHGGFTYK (736 aa)). Asn137 carries N-linked (GlcNAc...) asparagine glycosylation. An intrachain disulfide couples Cys198 to Cys199. N-linked (GlcNAc...) asparagine glycans are attached at residues Asn232 and Asn294. Asp386 (proton acceptor) is an active-site residue. Cys404 and Cys430 are disulfide-bonded. Tyr471 functions as the Schiff-base intermediate with substrate; via topaquinone in the catalytic mechanism. The residue at position 471 (Tyr471) is a 2',4',5'-topaquinone. Cu(2+) is bound by residues His520 and His522. Residues Asp529, Leu530, Asp531, and Glu572 each contribute to the Ca(2+) site. 2 N-linked (GlcNAc...) asparagine glycosylation sites follow: Asn581 and Asn592. Glu641 and Phe663 together coordinate Ca(2+). N-linked (GlcNAc...) asparagine glycosylation is present at Asn666. Residues Glu667, Asp673, and Leu674 each coordinate Ca(2+). Position 684 (His684) interacts with Cu(2+). Cys734 and Cys741 are disulfide-bonded.

Belongs to the copper/topaquinone oxidase family. In terms of assembly, homodimer; disulfide-linked. Probably forms heterodimers with AOC2. The cofactor is Cu(2+). Requires Ca(2+) as cofactor. L-topaquinone is required as a cofactor. In terms of processing, topaquinone (TPQ) is generated by copper-dependent autoxidation of a specific tyrosyl residue. Post-translationally, N- and O-glycosylated. In terms of tissue distribution, highly expressed in adipocytes, aorta and lung. Expressed at lower levels in heart, kidney, large intestine, liver, small intestine and stomach.

The protein localises to the cell membrane. It catalyses the reaction methylamine + O2 + H2O = formaldehyde + H2O2 + NH4(+). The catalysed reaction is benzylamine + O2 + H2O = benzaldehyde + H2O2 + NH4(+). The enzyme catalyses 2-phenylethylamine + O2 + H2O = 2-phenylacetaldehyde + H2O2 + NH4(+). In terms of biological role, catalyzes the oxidative deamination of primary amines to the corresponding aldehydes with the concomitant production of hydrogen peroxide and ammonia. Has a preference for the primary monoamines methylamine and benzylamine. Could also act on 2-phenylethylamine but much less efficiently. At endothelial cells surface can also function as a cell adhesion protein that participates in lymphocyte extravasation and recirculation by mediating the binding of lymphocytes to peripheral lymph node vascular endothelial cells in an L-selectin-independent fashion. The polypeptide is Amine oxidase [copper-containing] 3 (Rattus norvegicus (Rat)).